Consider the following 380-residue polypeptide: Glucose-1-phosphate adenylyltransferase (380 aa).

Alpha-D-glucose 1-phosphate-binding positions include Gly-164, 179-180 (EK), and Ser-190.

The protein belongs to the bacterial/plant glucose-1-phosphate adenylyltransferase family. As to quaternary structure, homotetramer.

It carries out the reaction alpha-D-glucose 1-phosphate + ATP + H(+) = ADP-alpha-D-glucose + diphosphate. It functions in the pathway glycan biosynthesis; glycogen biosynthesis. In terms of biological role, involved in the biosynthesis of ADP-glucose, a building block required for the elongation reactions to produce glycogen. Catalyzes the reaction between ATP and alpha-D-glucose 1-phosphate (G1P) to produce pyrophosphate and ADP-Glc. The polypeptide is Glucose-1-phosphate adenylyltransferase (Lacticaseibacillus casei (strain BL23) (Lactobacillus casei)).